Here is a 98-residue protein sequence, read N- to C-terminus: Ferredoxin-3 (98 aa).

4Fe-4S ferredoxin-type domains lie at 18–47 (FVEAVNQDKCIGCGRCFKACGRNVLILQAL) and 66–95 (VMSIIHPEYCIGCQACARACPKNCYTHSPL). Positions 27, 30, 33, 37, 75, 78, 81, and 85 each coordinate [4Fe-4S] cluster.

As to quaternary structure, homodimer. It depends on [4Fe-4S] cluster as a cofactor.

Functionally, ferredoxins are iron-sulfur proteins that transfer electrons in a wide variety of metabolic reactions. The chain is Ferredoxin-3 (fdxB) from Trichormus variabilis (strain ATCC 29413 / PCC 7937) (Anabaena variabilis).